Here is a 429-residue protein sequence, read N- to C-terminus: Trigger factor (429 aa).

The region spanning Gly-161 to Pro-246 is the PPIase FKBP-type domain.

The protein belongs to the FKBP-type PPIase family. Tig subfamily.

Its subcellular location is the cytoplasm. It carries out the reaction [protein]-peptidylproline (omega=180) = [protein]-peptidylproline (omega=0). Involved in protein export. Acts as a chaperone by maintaining the newly synthesized protein in an open conformation. Functions as a peptidyl-prolyl cis-trans isomerase. The polypeptide is Trigger factor (Ruthia magnifica subsp. Calyptogena magnifica).